Consider the following 187-residue polypeptide: UPF0398 protein LBA1157 (187 aa).

Belongs to the UPF0398 family.

This Lactobacillus acidophilus (strain ATCC 700396 / NCK56 / N2 / NCFM) protein is UPF0398 protein LBA1157.